The sequence spans 131 residues: UPF0102 protein YraN (131 aa).

Residues 1–19 are compositionally biased toward polar residues; that stretch reads MATVPTRSGSPRQLTTKQT. A disordered region spans residues 1–20; it reads MATVPTRSGSPRQLTTKQTG.

This sequence belongs to the UPF0102 family.

The chain is UPF0102 protein YraN from Shigella boydii serotype 18 (strain CDC 3083-94 / BS512).